We begin with the raw amino-acid sequence, 455 residues long: Ornithine decarboxylase (455 aa).

Lys67 carries the post-translational modification N6-(pyridoxal phosphate)lysine. Residues Ser197, Gly234, and 271 to 274 (EPGR) each bind pyridoxal 5'-phosphate. At Ser297 the chain carries Phosphoserine; by CK2. Residue 325-326 (YD) coordinates substrate. Cys354 acts as the Proton donor; shared with dimeric partner in catalysis. The residue at position 354 (Cys354) is an S-nitrosocysteine. Asp355 contributes to the substrate binding site. Residue Tyr383 participates in pyridoxal 5'-phosphate binding.

Belongs to the Orn/Lys/Arg decarboxylase class-II family. As to quaternary structure, homodimer. Only the dimer is catalytically active, as the active sites are constructed of residues from both monomers. Requires pyridoxal 5'-phosphate as cofactor.

It catalyses the reaction L-ornithine + H(+) = putrescine + CO2. The protein operates within amine and polyamine biosynthesis; putrescine biosynthesis via L-ornithine pathway; putrescine from L-ornithine: step 1/1. With respect to regulation, inhibited by antizymes (AZs) OAZ1, OAZ2 and OAZ3 in response to polyamine levels. AZs inhibit the assembly of the functional homodimer by binding to ODC monomers. Additionally, OAZ1 targets ODC monomers for ubiquitin-independent proteolytic destruction by the 26S proteasome. Its function is as follows. Catalyzes the first and rate-limiting step of polyamine biosynthesis that converts ornithine into putrescine, which is the precursor for the polyamines, spermidine and spermine. Polyamines are essential for cell proliferation and are implicated in cellular processes, ranging from DNA replication to apoptosis. This Cricetulus griseus (Chinese hamster) protein is Ornithine decarboxylase (ODC1).